A 236-amino-acid polypeptide reads, in one-letter code: Phosphoribosylaminoimidazole-succinocarboxamide synthase (236 aa).

Belongs to the SAICAR synthetase family.

The enzyme catalyses 5-amino-1-(5-phospho-D-ribosyl)imidazole-4-carboxylate + L-aspartate + ATP = (2S)-2-[5-amino-1-(5-phospho-beta-D-ribosyl)imidazole-4-carboxamido]succinate + ADP + phosphate + 2 H(+). Its pathway is purine metabolism; IMP biosynthesis via de novo pathway; 5-amino-1-(5-phospho-D-ribosyl)imidazole-4-carboxamide from 5-amino-1-(5-phospho-D-ribosyl)imidazole-4-carboxylate: step 1/2. The protein is Phosphoribosylaminoimidazole-succinocarboxamide synthase of Campylobacter jejuni subsp. doylei (strain ATCC BAA-1458 / RM4099 / 269.97).